The following is a 400-amino-acid chain: Elongation factor Tu (400 aa).

The 199-residue stretch at 10–208 (KPHLNVGTIG…TMDSYFPEPQ (199 aa)) folds into the tr-type G domain. The interval 19-26 (GHIDHGKT) is G1. 19–26 (GHIDHGKT) contacts GTP. Thr-26 provides a ligand contact to Mg(2+). Positions 60–64 (GITIN) are G2. Positions 81 to 84 (DCPG) are G3. GTP is bound by residues 81-85 (DCPGH) and 136-139 (NKTD). A G4 region spans residues 136-139 (NKTD). Residues 174-176 (SAL) are G5.

Belongs to the TRAFAC class translation factor GTPase superfamily. Classic translation factor GTPase family. EF-Tu/EF-1A subfamily. In terms of assembly, monomer.

The protein resides in the cytoplasm. It catalyses the reaction GTP + H2O = GDP + phosphate + H(+). Functionally, GTP hydrolase that promotes the GTP-dependent binding of aminoacyl-tRNA to the A-site of ribosomes during protein biosynthesis. The protein is Elongation factor Tu of Thermosipho africanus (strain TCF52B).